The primary structure comprises 340 residues: uncharacterized protein (340 aa).

The first 23 residues, 1–23 (MQKKVLSLVLVLAVLESIVPVSA), serve as a signal peptide directing secretion.

This is an uncharacterized protein from Archaeoglobus fulgidus (strain ATCC 49558 / DSM 4304 / JCM 9628 / NBRC 100126 / VC-16).